The chain runs to 308 residues: Coenzyme PQQ synthesis protein B (308 aa).

The protein belongs to the PqqB family.

The protein operates within cofactor biosynthesis; pyrroloquinoline quinone biosynthesis. May be involved in the transport of PQQ or its precursor to the periplasm. This chain is Coenzyme PQQ synthesis protein B, found in Klebsiella pneumoniae (strain 342).